The following is a 490-amino-acid chain: Allantoin permease (490 aa).

12 helical membrane-spanning segments follow: residues 36–56 (IWMGCIHNIPTYATVGGLIAI), 60–80 (PWQVLAIIITASLILFGALAL), 116–136 (AIMWLGIQTFAGSTALNILLL), 151–171 (ILGIHLSGLLSFVFFWAIHLL), 190–210 (LVYLVFGGMVWWAVDIAGGLG), 225–245 (TFWPFAAGVTGIIGIWATLIL), 265–285 (FYGLPGTFALFAFASITVTSG), 308–328 (YVIVLSVITLCIATISVNVAA), 350–370 (GSFITALLALFTVPWKLMESA), 373–393 (VYAFLGLIGGMLGPVAGVMMA), 425–445 (AFAATMLGALISLIGMYVPVL), and 448–468 (LYDISWFVGVLISFLFYIVLM).

This sequence belongs to the purine-cytosine permease (2.A.39) family.

Its subcellular location is the cell membrane. The catalysed reaction is (S)-allantoin(in) + H(+)(in) = (S)-allantoin(out) + H(+)(out). Uptake of allantoin into the cell. Allantoin uptake is not dependent on sodium, and PucI is likely to be a proton-coupled symporter. Shows highest recognition for binding of allantoin, good recognition for binding of hydantoin, L-5-benzylhydantoin and 5-hydroxyhydantoin, and to a lesser extent for a range of nucleobases and nucleosides. This Bacillus subtilis (strain 168) protein is Allantoin permease.